Consider the following 269-residue polypeptide: MSRLQTRFDQLKEQNRAALVTFVTAGDPGYDTSLAILKGLPAAGADVIELGMPFTDPMADGPAIQLANIRALEAKQNLLKTLQMVREFRKGNNDTPLVLMGYFNPIHKYGVPKFIADAKEAGVDGLIVVDMPPEHNGELCDPAQAAGIDFIRLTTPTTDDVRLPTVLNGSSGFVYYVSVAGVTGAGAATLEHVEEAVARLRRHTDLPISIGFGIRTPEQAAAIARLADGVVVGSALIDHIANAKNDQQAIDGVLGLCAALSEGVRNASV.

Active-site proton acceptor residues include Glu49 and Asp60.

Belongs to the TrpA family. Tetramer of two alpha and two beta chains.

The enzyme catalyses (1S,2R)-1-C-(indol-3-yl)glycerol 3-phosphate + L-serine = D-glyceraldehyde 3-phosphate + L-tryptophan + H2O. It functions in the pathway amino-acid biosynthesis; L-tryptophan biosynthesis; L-tryptophan from chorismate: step 5/5. Its function is as follows. The alpha subunit is responsible for the aldol cleavage of indoleglycerol phosphate to indole and glyceraldehyde 3-phosphate. The chain is Tryptophan synthase alpha chain from Pseudomonas syringae pv. syringae.